A 525-amino-acid chain; its full sequence is GMP synthase [glutamine-hydrolyzing] (525 aa).

Residues 8-206 (PLLILDFGSQ…VVDICKASTD (199 aa)) enclose the Glutamine amidotransferase type-1 domain. The active-site Nucleophile is the Cys-85. Residues His-180 and Glu-182 contribute to the active site. The region spanning 207 to 400 (WTPEHIIDEA…LGLPHDMVYR (194 aa)) is the GMPS ATP-PPase domain. 234 to 240 (SGGVDSS) is an ATP binding site.

As to quaternary structure, homodimer.

The enzyme catalyses XMP + L-glutamine + ATP + H2O = GMP + L-glutamate + AMP + diphosphate + 2 H(+). It functions in the pathway purine metabolism; GMP biosynthesis; GMP from XMP (L-Gln route): step 1/1. Functionally, catalyzes the synthesis of GMP from XMP. In Legionella pneumophila (strain Lens), this protein is GMP synthase [glutamine-hydrolyzing].